The following is a 177-amino-acid chain: 3-isopropylmalate dehydratase small subunit 1 (177 aa).

The tract at residues glycine 157–glutamate 177 is disordered. A compositionally biased stretch (low complexity) spans glutamate 162–glutamate 177.

This sequence belongs to the LeuD family. LeuD type 2 subfamily. As to quaternary structure, heterodimer of LeuC and LeuD.

It carries out the reaction (2R,3S)-3-isopropylmalate = (2S)-2-isopropylmalate. The protein operates within amino-acid biosynthesis; L-leucine biosynthesis; L-leucine from 3-methyl-2-oxobutanoate: step 2/4. Its function is as follows. Catalyzes the isomerization between 2-isopropylmalate and 3-isopropylmalate, via the formation of 2-isopropylmaleate. This Deinococcus radiodurans (strain ATCC 13939 / DSM 20539 / JCM 16871 / CCUG 27074 / LMG 4051 / NBRC 15346 / NCIMB 9279 / VKM B-1422 / R1) protein is 3-isopropylmalate dehydratase small subunit 1 (leuD1).